Here is a 205-residue protein sequence, read N- to C-terminus: Ribonuclease HII (205 aa).

The RNase H type-2 domain occupies 1–203; that stretch reads MKAGIDEAGK…VSNLRQKTLD (203 aa). A divalent metal cation-binding residues include aspartate 6 and glutamate 7. Arginine 46 lines the substrate pocket. An a divalent metal cation-binding site is contributed by aspartate 101. Substrate is bound by residues lysine 143, arginine 146, and tyrosine 164.

The protein belongs to the RNase HII family. Mn(2+) serves as cofactor. It depends on Mg(2+) as a cofactor.

It is found in the cytoplasm. It carries out the reaction Endonucleolytic cleavage to 5'-phosphomonoester.. Its function is as follows. Endonuclease that specifically degrades the RNA of RNA-DNA hybrids. In Archaeoglobus fulgidus (strain ATCC 49558 / DSM 4304 / JCM 9628 / NBRC 100126 / VC-16), this protein is Ribonuclease HII (rnhB).